The primary structure comprises 271 residues: Signal recognition particle receptor subunit beta (271 aa).

Residues 37-57 (LLSVVVAVLAVLLTLVFWKLI) form a helical membrane-spanning segment. GTP is bound by residues 71–79 (GLCDSGKTL) and 92–95 (TQTS). Ser112 is modified (phosphoserine). Gly120 contributes to the GTP binding site. Phosphothreonine is present on Thr214. Ala248 lines the GTP pocket.

The protein belongs to the SRP receptor beta subunit family. Heterodimer with SRPRA.

The protein localises to the endoplasmic reticulum membrane. Its function is as follows. Component of the signal recognition particle (SRP) complex receptor (SR). Ensures, in conjunction with the SRP complex, the correct targeting of the nascent secretory proteins to the endoplasmic reticulum membrane system. May mediate the membrane association of SR. This chain is Signal recognition particle receptor subunit beta (SRPRB), found in Homo sapiens (Human).